The following is a 180-amino-acid chain: Shikimate kinase (180 aa).

14 to 19 (GAGKSC) is an ATP binding site. Residue S18 coordinates Mg(2+). Residues D36, R60, and G82 each contribute to the substrate site. R120 is an ATP binding site. R139 serves as a coordination point for substrate.

This sequence belongs to the shikimate kinase family. Monomer. Mg(2+) serves as cofactor.

Its subcellular location is the cytoplasm. The catalysed reaction is shikimate + ATP = 3-phosphoshikimate + ADP + H(+). It functions in the pathway metabolic intermediate biosynthesis; chorismate biosynthesis; chorismate from D-erythrose 4-phosphate and phosphoenolpyruvate: step 5/7. Functionally, catalyzes the specific phosphorylation of the 3-hydroxyl group of shikimic acid using ATP as a cosubstrate. This chain is Shikimate kinase, found in Xanthomonas euvesicatoria pv. vesicatoria (strain 85-10) (Xanthomonas campestris pv. vesicatoria).